A 238-amino-acid chain; its full sequence is Purine nucleoside phosphorylase DeoD-type (238 aa).

Histidine 5 contacts a purine D-ribonucleoside. Phosphate contacts are provided by residues glycine 21, arginine 25, arginine 44, and 88–91; that span reads RIGT. A purine D-ribonucleoside contacts are provided by residues 180 to 182 and 204 to 205; these read DME and SD. Catalysis depends on aspartate 205, which acts as the Proton donor.

The protein belongs to the PNP/UDP phosphorylase family. Homohexamer; trimer of homodimers.

The catalysed reaction is a purine D-ribonucleoside + phosphate = a purine nucleobase + alpha-D-ribose 1-phosphate. It carries out the reaction a purine 2'-deoxy-D-ribonucleoside + phosphate = a purine nucleobase + 2-deoxy-alpha-D-ribose 1-phosphate. Catalyzes the reversible phosphorolytic breakdown of the N-glycosidic bond in the beta-(deoxy)ribonucleoside molecules, with the formation of the corresponding free purine bases and pentose-1-phosphate. This Buchnera aphidicola subsp. Baizongia pistaciae (strain Bp) protein is Purine nucleoside phosphorylase DeoD-type.